A 261-amino-acid polypeptide reads, in one-letter code: Zinc import ATP-binding protein ZnuC (261 aa).

The ABC transporter domain occupies 6 to 221 (IRLEQVGVTF…PAFVELFGKN (216 aa)). 38–45 (GPNGAGKT) is an ATP binding site.

It belongs to the ABC transporter superfamily. Zinc importer (TC 3.A.1.15.5) family. The complex is composed of two ATP-binding proteins (ZnuC), two transmembrane proteins (ZnuB) and a solute-binding protein (ZnuA).

The protein localises to the cell inner membrane. It catalyses the reaction Zn(2+)(out) + ATP(in) + H2O(in) = Zn(2+)(in) + ADP(in) + phosphate(in) + H(+)(in). Its function is as follows. Part of the ABC transporter complex ZnuABC involved in zinc import. Responsible for energy coupling to the transport system. The chain is Zinc import ATP-binding protein ZnuC from Pseudomonas fluorescens (strain ATCC BAA-477 / NRRL B-23932 / Pf-5).